Reading from the N-terminus, the 160-residue chain is MNKFKYTLAIIKPDILVKQNQNVDKIINKIESKFIIHQRKQIKLSLEEAEQFYKDHRGKFFYERLISFMTRGDIIPLILSDKSLEINNNNNNNNNNTSIKPWRDFIGPTHRDKAREQIGCLRGEYGTSDTRNAFHGSGSEEEAIDEINFFFPHFLENNKK.

The ATP site is built by K12, F61, R103, T109, R122, and N132. H135 (pros-phosphohistidine intermediate) is an active-site residue.

It belongs to the NDK family. Mg(2+) serves as cofactor.

It carries out the reaction a 2'-deoxyribonucleoside 5'-diphosphate + ATP = a 2'-deoxyribonucleoside 5'-triphosphate + ADP. The catalysed reaction is a ribonucleoside 5'-diphosphate + ATP = a ribonucleoside 5'-triphosphate + ADP. The sequence is that of Probable nucleoside diphosphate kinase DDB_G0292928 from Dictyostelium discoideum (Social amoeba).